The chain runs to 280 residues: MSNPESLKKQVEPPGYNELFMVEDVCNVDLEQGLDLCKPEKVNKQSQRSRQSRQSLFTNTIKPQKDKMNIKTNKIKEFLNDLFTEFSKFHNSYYPDGRISTRSNFRWPLLIIWSIIIVFAVDKKFEVQKFLSIWINENRFYSEIWVPIAIYVCLLVLMLLSLIFFAEFAVLALRVTGVIIAVLGAVLGMIIAVLGMIIAALGMIIAALGATITGLLYFGHWALYKLVILSLGFKIVTPGDVCVSNTLPTHNGETALHSETTVGSDIEQIELQNMPTPVKK.

The next 4 helical transmembrane spans lie at 107–127 (WPLLIIWSIIIVFAVDKKFEV), 144–164 (IWVPIAIYVCLLVLMLLSLIF), 178–198 (VIIAVLGAVLGMIIAVLGMII), and 199–219 (AALGMIIAALGATITGLLYFG).

Belongs to the UPF0494 family.

The protein resides in the membrane. The polypeptide is UPF0494 membrane protein SPAC212.01c (Schizosaccharomyces pombe (strain 972 / ATCC 24843) (Fission yeast)).